The primary structure comprises 351 residues: Columbamine O-methyltransferase (351 aa).

Positions 198, 221, 241, 242, and 255 each coordinate S-adenosyl-L-methionine. His259 (proton acceptor) is an active-site residue.

The protein belongs to the class I-like SAM-binding methyltransferase superfamily. Cation-independent O-methyltransferase family. COMT subfamily. Homodimer.

It catalyses the reaction columbamine + S-adenosyl-L-methionine = palmatine + S-adenosyl-L-homocysteine + H(+). The catalysed reaction is (S)-tetrahydrocolumbamine + S-adenosyl-L-methionine = (S)-tetrahydropalmatine + S-adenosyl-L-homocysteine + H(+). The protein operates within alkaloid biosynthesis; palmatine biosynthesis; palmatine from columbamine: step 1/1. Functionally, catalyzes the conversion of tetrahydrocolumbamine to (S)-tetrahydropalmatine and of columbamine to palmatine, an isoquinoline alkaloid. The sequence is that of Columbamine O-methyltransferase from Coptis japonica (Japanese goldthread).